The primary structure comprises 219 residues: 7-cyano-7-deazaguanine synthase (219 aa).

10-20 is an ATP binding site; the sequence is FSGGQDSTTCL. Residues cysteine 188, cysteine 197, cysteine 200, and cysteine 203 each coordinate Zn(2+).

This sequence belongs to the QueC family. Homodimer. Requires Zn(2+) as cofactor.

The enzyme catalyses 7-carboxy-7-deazaguanine + NH4(+) + ATP = 7-cyano-7-deazaguanine + ADP + phosphate + H2O + H(+). Its pathway is purine metabolism; 7-cyano-7-deazaguanine biosynthesis. Catalyzes the ATP-dependent conversion of 7-carboxy-7-deazaguanine (CDG) to 7-cyano-7-deazaguanine (preQ(0)). The polypeptide is 7-cyano-7-deazaguanine synthase (Clostridium botulinum (strain Loch Maree / Type A3)).